The sequence spans 185 residues: Lactoylglutathione lyase (185 aa).

Residues 1–21 (MAAEPKESPSNNPGLHTTPDE) form a disordered region. Residues 27 to 174 (IMQQTMFRIK…DGYWIEIFDR (148 aa)) form the VOC domain. Substrate contacts are provided by Gln30 and Arg34. Residue Gln30 coordinates Zn(2+). Zn(2+) is bound at residue Glu96. Residues Asn100, Arg120, His124, and 154-155 (KM) each bind substrate. Residue His124 participates in Zn(2+) binding. Glu170 is a Zn(2+) binding site. Glu170 (proton donor/acceptor) is an active-site residue.

It belongs to the glyoxalase I family. In terms of assembly, homodimer. It depends on Zn(2+) as a cofactor.

The enzyme catalyses (R)-S-lactoylglutathione = methylglyoxal + glutathione. The protein operates within secondary metabolite metabolism; methylglyoxal degradation; (R)-lactate from methylglyoxal: step 1/2. Its function is as follows. Catalyzes the conversion of hemimercaptal, formed from methylglyoxal and glutathione, to S-lactoylglutathione. Active toward the hemithioacetal adducts formed by reacting methylglyoxal or phenylglyoxal with glutathione, homoglutathione or gamma-glutamylcysteine, showing no preference for homoglutathione adducts over glutathione adducts. This is Lactoylglutathione lyase (GLXI) from Glycine max (Soybean).